Reading from the N-terminus, the 76-residue chain is Translation initiation factor IF-1 (76 aa).

Positions 1-72 constitute an S1-like domain; it reads MAKKDVVVMQ…NKGRIVKREK (72 aa).

It belongs to the IF-1 family. Component of the 30S ribosomal translation pre-initiation complex which assembles on the 30S ribosome in the order IF-2 and IF-3, IF-1 and N-formylmethionyl-tRNA(fMet); mRNA recruitment can occur at any time during PIC assembly.

It localises to the cytoplasm. In terms of biological role, one of the essential components for the initiation of protein synthesis. Stabilizes the binding of IF-2 and IF-3 on the 30S subunit to which N-formylmethionyl-tRNA(fMet) subsequently binds. Helps modulate mRNA selection, yielding the 30S pre-initiation complex (PIC). Upon addition of the 50S ribosomal subunit IF-1, IF-2 and IF-3 are released leaving the mature 70S translation initiation complex. This is Translation initiation factor IF-1 from Petrotoga mobilis (strain DSM 10674 / SJ95).